We begin with the raw amino-acid sequence, 539 residues long: MPIEIVCKIKFAEEDAKPKEKEAGDEQSLLGAVAPGAAPRDLATFASTSTLHGLGRACGPGPHGLRRTLWALALLTSLAAFLYQAAGLARGYLTRPHLVAMDPAAPAPVAGFPAVTLCNINRFRHSALSDADIFHLANLTGLPPKDRDGHRAAGLRYPEPDMVDILNRTGHQLADMLKSCNFSGHHCSASNFSVVYTRYGKCYTFNADPRSSLPSRAGGMGSGLEIMLDIQQEEYLPIWRETNETSFEAGIRVQIHSQEEPPYIHQLGFGVSPGFQTFVSCQEQRLTYLPQPWGNCRAESELREPELQGYSAYSVSACRLRCEKEAVLQRCHCRMVHMPGNETICPPNIYIECADHTLDSLGGGPEGPCFCPTPCNLTRYGKEISMVRIPNRGSARYLARKYNRNETYIRENFLVLDVFFEALTSEAMEQRAAYGLSALLGDLGGQMGLFIGASILTLLEILDYIYEVSWDRLKRVWRRPKTPLRTSTGGISTLGLQELKEQSPCPSRGRVEGGGVSSLLPNHHHPHGPPGGLFEDFAC.

The Cytoplasmic segment spans residues 1–68; the sequence is MPIEIVCKIK…GPGPHGLRRT (68 aa). A helical membrane pass occupies residues 69-89; it reads LWALALLTSLAAFLYQAAGLA. Topologically, residues 90–438 are extracellular; sequence RGYLTRPHLV…EQRAAYGLSA (349 aa). 2 disulfide bridges follow: cysteine 118-cysteine 202 and cysteine 180-cysteine 187. Residues asparagine 191 and asparagine 243 are each glycosylated (N-linked (GlcNAc...) asparagine). 5 disulfides stabilise this stretch: cysteine 296–cysteine 375, cysteine 318–cysteine 371, cysteine 322–cysteine 369, cysteine 331–cysteine 353, and cysteine 333–cysteine 345. Asparagine 376 is a glycosylation site (N-linked (GlcNAc...) asparagine). A helical membrane pass occupies residues 439–459; sequence LLGDLGGQMGLFIGASILTLL. The GAS motif; ion selectivity filter signature appears at 452–454; it reads GAS. The Cytoplasmic portion of the chain corresponds to 460–539; the sequence is EILDYIYEVS…PGGLFEDFAC (80 aa). A disordered region spans residues 501–531; sequence EQSPCPSRGRVEGGGVSSLLPNHHHPHGPPG.

The protein belongs to the amiloride-sensitive sodium channel (TC 1.A.6) family. ASIC4 subfamily. Homotrimer. Heterotrimer; with other ASIC proteins producing functional channels. Expressed in pituitary gland. Weakly expressed in brain, vestibular system and organ of Corti.

It is found in the cell membrane. In terms of biological role, does not exhibit measurable stand-alone pH-gated sodium channel activity but may form pH-gated heterotrimeric sodium channels. Its activity could also depend on alternative gating mechanisms. The protein is Acid-sensing ion channel 4 of Homo sapiens (Human).